Consider the following 287-residue polypeptide: Phosphoribosylaminoimidazole-succinocarboxamide synthase (287 aa).

Belongs to the SAICAR synthetase family.

It carries out the reaction 5-amino-1-(5-phospho-D-ribosyl)imidazole-4-carboxylate + L-aspartate + ATP = (2S)-2-[5-amino-1-(5-phospho-beta-D-ribosyl)imidazole-4-carboxamido]succinate + ADP + phosphate + 2 H(+). The protein operates within purine metabolism; IMP biosynthesis via de novo pathway; 5-amino-1-(5-phospho-D-ribosyl)imidazole-4-carboxamide from 5-amino-1-(5-phospho-D-ribosyl)imidazole-4-carboxylate: step 1/2. The chain is Phosphoribosylaminoimidazole-succinocarboxamide synthase from Neisseria meningitidis serogroup B (strain ATCC BAA-335 / MC58).